The sequence spans 388 residues: Cystathionine gamma-synthase (388 aa).

Lys-208 carries the post-translational modification N6-(pyridoxal phosphate)lysine.

It belongs to the trans-sulfuration enzymes family. Homotetramer. The cofactor is pyridoxal 5'-phosphate.

Its subcellular location is the cytoplasm. The enzyme catalyses O-succinyl-L-homoserine + L-cysteine = L,L-cystathionine + succinate + H(+). Catalyzes the formation of L-cystathionine from O-succinyl-L-homoserine (OSHS) and L-cysteine, via a gamma-replacement reaction. In the absence of thiol, catalyzes gamma-elimination to form 2-oxobutanoate, succinate and ammonia. This is Cystathionine gamma-synthase (metB) from Mycobacterium leprae (strain TN).